We begin with the raw amino-acid sequence, 122 residues long: MPTIQQLIRSERKRVYNKTKSPALKACPQRRGVCTRVYTTTPKKPNSALRKVARVRLTSGFEVTAYIPGIGHNLQEHSVVLIRGGRVKDLPGVRYHIIRGILDTAGVKDRAQSRSKYGVKRS.

This sequence belongs to the universal ribosomal protein uS12 family. As to quaternary structure, part of the 30S ribosomal subunit.

Its subcellular location is the plastid. The protein localises to the chloroplast. Its function is as follows. With S4 and S5 plays an important role in translational accuracy. Located at the interface of the 30S and 50S subunits. The chain is Small ribosomal subunit protein uS12c (rps12) from Mesostigma viride (Green alga).